The sequence spans 90 residues: Large ribosomal subunit protein uL23c (90 aa).

Belongs to the universal ribosomal protein uL23 family. Part of the 50S ribosomal subunit.

It is found in the plastid. It localises to the chloroplast. In terms of biological role, binds to 23S rRNA. In Tetradesmus obliquus (Green alga), this protein is Large ribosomal subunit protein uL23c (rpl23).